The chain runs to 118 residues: Large ribosomal subunit protein bL19 (118 aa).

The protein belongs to the bacterial ribosomal protein bL19 family.

This protein is located at the 30S-50S ribosomal subunit interface and may play a role in the structure and function of the aminoacyl-tRNA binding site. This is Large ribosomal subunit protein bL19 from Campylobacter jejuni subsp. jejuni serotype O:2 (strain ATCC 700819 / NCTC 11168).